The chain runs to 311 residues: Beta-lactamase (311 aa).

The segment at residues 1–34 is a signal peptide (tat-type signal); sequence MRLTQAPPSRRTLMTLGAGATMAALLPAGGAAYA. The active-site Acyl-ester intermediate is the S87. Residue 255 to 257 coordinates substrate; sequence KTG.

It belongs to the class-A beta-lactamase family. Predicted to be exported by the Tat system. The position of the signal peptide cleavage has not been experimentally proven.

It catalyses the reaction a beta-lactam + H2O = a substituted beta-amino acid. This is Beta-lactamase (bla) from Kitasatospora aureofaciens (Streptomyces aureofaciens).